Reading from the N-terminus, the 630-residue chain is Probable potassium transport system protein Kup (630 aa).

The next 12 membrane-spanning stretches (helical) occupy residues 19 to 39, 59 to 79, 108 to 128, 145 to 165, 173 to 193, 220 to 240, 255 to 275, 284 to 304, 345 to 365, 374 to 394, 405 to 425, and 427 to 447; these read GLIG…LYAV, LLSL…VLLI, WIIG…ATIT, PGLK…LFFV, VGGA…ALGL, LLAF…EALY, WLFF…ALVI, PFFF…ATIA, IYVP…VLGF, AYGI…AFVY, TVLV…SNVL, and VFDG…VMTT.

It belongs to the HAK/KUP transporter (TC 2.A.72) family.

It is found in the cell inner membrane. It catalyses the reaction K(+)(in) + H(+)(in) = K(+)(out) + H(+)(out). Transport of potassium into the cell. Likely operates as a K(+):H(+) symporter. In Acidiphilium cryptum (strain JF-5), this protein is Probable potassium transport system protein Kup.